The chain runs to 313 residues: Ribosomal protein L11 methyltransferase (313 aa).

S-adenosyl-L-methionine-binding residues include threonine 164, glycine 185, aspartate 207, and asparagine 249.

The protein belongs to the methyltransferase superfamily. PrmA family.

Its subcellular location is the cytoplasm. It catalyses the reaction L-lysyl-[protein] + 3 S-adenosyl-L-methionine = N(6),N(6),N(6)-trimethyl-L-lysyl-[protein] + 3 S-adenosyl-L-homocysteine + 3 H(+). Methylates ribosomal protein L11. The chain is Ribosomal protein L11 methyltransferase from Clostridium perfringens (strain ATCC 13124 / DSM 756 / JCM 1290 / NCIMB 6125 / NCTC 8237 / Type A).